An 84-amino-acid chain; its full sequence is Cell division topological specificity factor (84 aa).

This sequence belongs to the MinE family.

Functionally, prevents the cell division inhibition by proteins MinC and MinD at internal division sites while permitting inhibition at polar sites. This ensures cell division at the proper site by restricting the formation of a division septum at the midpoint of the long axis of the cell. In Ralstonia pickettii (strain 12J), this protein is Cell division topological specificity factor.